A 189-amino-acid polypeptide reads, in one-letter code: Small ribosomal subunit protein uS4 (189 aa).

Residues 107 to 181 enclose the S4 RNA-binding domain; that stretch reads RRLQTQVFKL…VKRRTLRKGD (75 aa). The segment at 161 to 189 is disordered; the sequence is QSPYGGGRPGRVKRRTLRKGDGAGGDDEE.

Belongs to the universal ribosomal protein uS4 family. In terms of assembly, component of the small ribosomal subunit. Part of the small subunit (SSU) processome, composed of more than 70 proteins and the RNA chaperone small nucleolar RNA (snoRNA) U3.

Its subcellular location is the cytoplasm. It localises to the nucleus. It is found in the nucleolus. Its function is as follows. Component of the small ribosomal subunit. The ribosome is a large ribonucleoprotein complex responsible for the synthesis of proteins in the cell. Part of the small subunit (SSU) processome, first precursor of the small eukaryotic ribosomal subunit. During the assembly of the SSU processome in the nucleolus, many ribosome biogenesis factors, an RNA chaperone and ribosomal proteins associate with the nascent pre-rRNA and work in concert to generate RNA folding, modifications, rearrangements and cleavage as well as targeted degradation of pre-ribosomal RNA by the RNA exosome. The polypeptide is Small ribosomal subunit protein uS4 (rps-9) (Caenorhabditis elegans).